The chain runs to 1741 residues: Meiosis regulator and mRNA stability factor 1 (1741 aa).

The NYN domain occupies 345 to 482 (IGVFWDIENC…ALLHHAHELV (138 aa)). Disordered stretches follow at residues 594–636 (KVKS…GSVI), 659–678 (TENHQEHLREIPSQNNSHAA), and 683–716 (LTTKKSGVGESSCKSSYKKETSVSRSMTNSPVDK). The segment covering 659–668 (TENHQEHLRE) has biased composition (basic and acidic residues). Positions 788–867 (ADIQISNIDY…KRIQVSLATG (80 aa)) constitute an RRM domain. HTH OST-type domains are found at residues 872–946 (SLSL…SPLG), 1000–1076 (SLKT…HNKP), 1097–1171 (QLIQ…LTHR), 1173–1248 (QVKR…IPKR), 1257–1332 (RTKQ…TEVE), 1333–1408 (QVKA…INRK), 1409–1483 (SLRT…VRLT), and 1484–1558 (NLYM…LKND). Polar residues predominate over residues 1684-1700 (KLTSGSVASSTAENTSV). Residues 1684–1727 (KLTSGSVASSTAENTSVPPRHSSETQLNKEAMDSPAKKQHKNKV) are disordered.

The protein resides in the peroxisome. Functionally, essential regulator of oogenesis required for female meiotic progression to repress transposable elements and preventing their mobilization, which is essential for the germline integrity. This chain is Meiosis regulator and mRNA stability factor 1, found in Gallus gallus (Chicken).